A 704-amino-acid chain; its full sequence is Protein NBR1 homolog (704 aa).

N-acetylmethionine is present on methionine 1. Residues alanine 7 to glycine 92 enclose the PB1 domain. Polar residues-rich tracts occupy residues threonine 95–proline 108, proline 171–serine 189, and histidine 223–serine 233. Disordered stretches follow at residues threonine 95–proline 114 and proline 171–serine 233. The ZZ-type; degenerate zinc-finger motif lies at histidine 286–serine 336. The Zn(2+) site is built by cysteine 291, cysteine 294, cysteine 315, and cysteine 318. Positions glycine 657–glutamate 701 constitute a UBA domain. The LIR motif lies at tryptophan 661–isoleucine 664.

As to quaternary structure, homodimer. Interacts with ATG8A, ATG8B, ATG8C, ATG8D, ATG8F and ATG8I. Binds to ubiquitin.

Its subcellular location is the cytoplasm. It is found in the vacuole. Functionally, autophagic substrate degraded in the vacuole by non-selective autophagy. Requires ATG8 protein expression to be recognized as an autophagic substrate. Acts probably as a receptor for autophagosomal degradation of ubiquitinated proteins. Targets ubiquitinated protein aggregates derived from denatured or damaged non-native proteins generated under stress conditions. Functions additively with the E3 ubiquitin-protein ligase CHIP for autophagosomal degradation of proteotoxic aggregates formed under stress conditions. The polypeptide is Protein NBR1 homolog (Arabidopsis thaliana (Mouse-ear cress)).